A 330-amino-acid chain; its full sequence is 4-epi-cubebol synthase ((2E,6E)-farnesyl diphosphate cyclizing) (330 aa).

Mg(2+) contacts are provided by Asp-91 and Glu-96. The DDXXXE motif signature appears at 91 to 96 (DDAFCE). Position 184 (Arg-184) interacts with substrate. Mg(2+)-binding residues include Asn-230 and Ser-234. A substrate-binding site is contributed by Lys-237. Glu-238 is a binding site for Mg(2+). 316-317 (RY) provides a ligand contact to substrate.

This sequence belongs to the terpene synthase family. Mg(2+) is required as a cofactor.

It carries out the reaction (2E,6E)-farnesyl diphosphate + H2O = 4-epi-cubebol + diphosphate. Its pathway is secondary metabolite biosynthesis; terpenoid biosynthesis. Functionally, catalyzes the conversion of (2E,6E)-farnesyl diphosphate (FPP) to yield the bicyclic sesquiterpenol 4-epi-cubebol via a 1,10-cyclization, which requires the abstraction of the pyrophosphate from FPP to yield a (E,E)-germacradienyl cation. The only accepted substrate is (2E,6E)-farnesyl diphosphate (FPP). The polypeptide is 4-epi-cubebol synthase ((2E,6E)-farnesyl diphosphate cyclizing) (Streptosporangium roseum (strain ATCC 12428 / DSM 43021 / JCM 3005 / KCTC 9067 / NCIMB 10171 / NRRL 2505 / NI 9100)).